Consider the following 801-residue polypeptide: Transferrin receptor protein 2 (801 aa).

Topologically, residues 1–83 (MERLWGLFQR…WAAAGRRAAP (83 aa)) are cytoplasmic. The interval 16 to 45 (PRSSQTVYQRVEGPRKGHLEEEEEDGEEGA) is disordered. The short motif at 23 to 26 (YQRV) is the Endocytosis signal element. The segment covering 35–45 (EEEEEDGEEGA) has biased composition (acidic residues). Residues 84–104 (YLVLTALLIFTGAFLLGYVAF) form a helical; Signal-anchor for type II membrane protein membrane-spanning segment. At 105-801 (RGSCQACGDS…GDVWNIDNNF (697 aa)) the chain is on the extracellular side. N-linked (GlcNAc...) asparagine glycosylation is found at Asn-240, Asn-339, Asn-540, and Asn-754.

The protein belongs to the peptidase M28 family. M28B subfamily. Homodimer. Predominantly expressed in liver. While the alpha form is also expressed in spleen, lung, muscle, prostate and peripheral blood mononuclear cells, the beta form is expressed in all tissues tested, albeit weakly.

It localises to the cell membrane. The protein resides in the cytoplasm. Mediates cellular uptake of transferrin-bound iron in a non-iron dependent manner. May be involved in iron metabolism, hepatocyte function and erythrocyte differentiation. This is Transferrin receptor protein 2 (TFR2) from Homo sapiens (Human).